The primary structure comprises 932 residues: Transcription initiation factor TFIID subunit 3 (932 aa).

Disordered stretches follow at residues 130–201, 213–347, 403–465, and 480–579; these read PIVS…LSTK, REPL…PSAM, REPD…DNSW, and LGAP…PWRE. Residues 158 to 171 show a composition bias toward acidic residues; the sequence is LEEDDEMEEEEVIN. S183, S199, S229, and S243 each carry phosphoserine. K266 is modified (N6-acetyllysine). Over residues 266–283 the composition is skewed to polar residues; it reads KSFTPKTKTKASSPGQKT. Phosphoserine is present on residues S291, S297, and S301. The span at 408-423 shows a compositional bias: low complexity; sequence FEFSSGSESEGDTFTS. Positions 436-446 are enriched in polar residues; sequence KASTSSNNFTK. Residues 447–461 are compositionally biased toward low complexity; it reads SLATPLPLSSGTSSS. T502 is subject to Phosphothreonine. Positions 505 to 515 are enriched in basic and acidic residues; the sequence is PLHKGYEEKAK. Over residues 524 to 538 the composition is skewed to basic residues; that stretch reads KKLKKELKTKLKKKE. Residues 539-579 show a composition bias toward basic and acidic residues; it reads KQRDRERERERNKERSKEKDKMREREKEKEAGKELKYPWRE. A Glycyl lysine isopeptide (Lys-Gly) (interchain with G-Cter in SUMO2) cross-link involves residue K582. Positions 607–657 are disordered; that stretch reads KDGIVRREREKHKDKKKDRERSKREKDKRERERLKEKNREDKIKAPPTQLV. Basic and acidic residues predominate over residues 623–650; sequence KDRERSKREKDKRERERLKEKNREDKIK. At S669 the chain carries Phosphoserine. Positions 681-746 are disordered; the sequence is AFSPMLPEKL…EKEKEKHKHE (66 aa). Positions 689–702 are enriched in basic and acidic residues; the sequence is KLFEEKEKPKEKER. Residues 703–714 are compositionally biased toward basic residues; it reads KKDKKEKKKKKE. Basic and acidic residues predominate over residues 715 to 740; that stretch reads KEKEKEKKEREREKERREREKREKEK. A Glycyl lysine isopeptide (Lys-Gly) (interchain with G-Cter in SUMO2) cross-link involves residue K749. Residue S758 is modified to Phosphoserine. K779 is subject to N6-acetyllysine. The PHD-type zinc-finger motif lies at 867 to 917; the sequence is IWICPGCNKPDDGSPMIGCDDCDDWYHWPCVGIMAAPPEEMQWFCPKCANK.

Belongs to the TAF3 family. As to quaternary structure, component of the TFIID basal transcription factor complex, composed of TATA-box-binding protein TBP, and a number of TBP-associated factors (TAFs), including TAF1, TAF2, TAF3, TAF4, TAF5, TAF6, TAF7, TAF8, TAF9, TAF10, TAF11, TAF12 and TAF13. Interacts with TAF10 via histone fold. Interacts with TAF13, TBP, SAP130 and GCN5L2. Interacts with TBPL2.

It is found in the nucleus. Its function is as follows. The TFIID basal transcription factor complex plays a major role in the initiation of RNA polymerase II (Pol II)-dependent transcription. TFIID recognizes and binds promoters with or without a TATA box via its subunit TBP, a TATA-box-binding protein, and promotes assembly of the pre-initiation complex (PIC). The TFIID complex consists of TBP and TBP-associated factors (TAFs), including TAF1, TAF2, TAF3, TAF4, TAF5, TAF6, TAF7, TAF8, TAF9, TAF10, TAF11, TAF12 and TAF13. The TFIID complex structure can be divided into 3 modules TFIID-A, TFIID-B, and TFIID-C. TAF3 forms the TFIID-A module together with TAF5 and TBP. Required in complex with TBPL2 for the differentiation of myoblasts into myocytes. The TAF3-TBPL2 complex replaces TFIID at specific promoters at an early stage in the differentiation process. This chain is Transcription initiation factor TFIID subunit 3 (Taf3), found in Mus musculus (Mouse).